Reading from the N-terminus, the 350-residue chain is Transmembrane protein 185B (350 aa).

7 helical membrane passes run 16 to 36 (LIYA…DGVI), 41 to 61 (WAVF…ASVG), 81 to 101 (FKAM…EVLV), 111 to 131 (FWLL…AACV), 168 to 188 (WLVV…VVLY), 211 to 231 (VTMA…EVLL), and 240 to 260 (MFSY…LMAT).

This sequence belongs to the TMEM185 family.

It localises to the membrane. The chain is Transmembrane protein 185B (TMEM185B) from Bos taurus (Bovine).